A 452-amino-acid chain; its full sequence is Tubulin alpha-6 chain (452 aa).

Residues glutamine 11, glutamate 69, serine 138, glycine 142, threonine 143, threonine 177, asparagine 204, and asparagine 226 each contribute to the GTP site. Glutamate 69 contributes to the Mg(2+) binding site. Residue glutamate 252 is part of the active site.

The protein belongs to the tubulin family. Dimer of alpha and beta chains. A typical microtubule is a hollow water-filled tube with an outer diameter of 25 nm and an inner diameter of 15 nM. Alpha-beta heterodimers associate head-to-tail to form protofilaments running lengthwise along the microtubule wall with the beta-tubulin subunit facing the microtubule plus end conferring a structural polarity. Microtubules usually have 13 protofilaments but different protofilament numbers can be found in some organisms and specialized cells. It depends on Mg(2+) as a cofactor.

The protein resides in the cytoplasm. Its subcellular location is the cytoskeleton. It localises to the spindle. The catalysed reaction is GTP + H2O = GDP + phosphate + H(+). In terms of biological role, tubulin is the major constituent of microtubules, a cylinder consisting of laterally associated linear protofilaments composed of alpha- and beta-tubulin heterodimers. Microtubules grow by the addition of GTP-tubulin dimers to the microtubule end, where a stabilizing cap forms. Below the cap, tubulin dimers are in GDP-bound state, owing to GTPase activity of alpha-tubulin. The sequence is that of Tubulin alpha-6 chain (TUBA6) from Naegleria pringsheimi (Amoeba).